The sequence spans 117 residues: Histone-like protein Hq1 (117 aa).

Composition is skewed to basic residues over residues 1 to 17 (MPAK…RSKA) and 39 to 50 (RKLRAAQKKLAK). The tract at residues 1–117 (MPAKKRKTTR…RGRGRPRKKA (117 aa)) is disordered. Residues 51–68 (AKKDASRKLAKLRKEAAR) are compositionally biased toward basic and acidic residues. The segment covering 71 to 117 (AAAKKTRAPSKKGRKKATRKKGGGRSRKTARKVSTMKRGRGRPRKKA) has biased composition (basic residues).

Functionally, binds DNA in vitro. This Coxiella burnetii (strain RSA 493 / Nine Mile phase I) protein is Histone-like protein Hq1 (hcbA).